The chain runs to 520 residues: Transactivator/viroplasmin protein (520 aa).

The interval 487–520 (QNASADSGPKDGPPPTRSIVEKEDVPTTSSKQVD) is disordered.

The protein belongs to the caulimoviridae viroplasmin family.

Its subcellular location is the host cytoplasm. Its function is as follows. Enhances the ribosomal termination-reinitiation event leading to the translation of major open reading frames on the polycistronic viral RNAs. This is Transactivator/viroplasmin protein from Arabidopsis thaliana (Mouse-ear cress).